Here is a 90-residue protein sequence, read N- to C-terminus: Large ribosomal subunit protein eL34 (90 aa).

Positions 38 to 65 (ARCGRPLGGVPRGRPPRVRRLSKTAKRP) are disordered. The span at 51–62 (RPPRVRRLSKTA) shows a compositional bias: basic residues.

It belongs to the eukaryotic ribosomal protein eL34 family.

This Aeropyrum pernix (strain ATCC 700893 / DSM 11879 / JCM 9820 / NBRC 100138 / K1) protein is Large ribosomal subunit protein eL34 (rpl34e).